Consider the following 129-residue polypeptide: Glycine cleavage system H protein (129 aa).

The Lipoyl-binding domain occupies 22-103 (TGTVGITDYA…AHTAWIMKIE (82 aa)). Lysine 63 is subject to N6-lipoyllysine.

It belongs to the GcvH family. In terms of assembly, the glycine cleavage system is composed of four proteins: P, T, L and H. (R)-lipoate is required as a cofactor.

Functionally, the glycine cleavage system catalyzes the degradation of glycine. The H protein shuttles the methylamine group of glycine from the P protein to the T protein. In Acidobacterium capsulatum (strain ATCC 51196 / DSM 11244 / BCRC 80197 / JCM 7670 / NBRC 15755 / NCIMB 13165 / 161), this protein is Glycine cleavage system H protein.